Consider the following 314-residue polypeptide: Formimidoylglutamase (314 aa).

Residues histidine 127, aspartate 151, histidine 153, aspartate 155, aspartate 239, and aspartate 241 each contribute to the Mn(2+) site.

This sequence belongs to the arginase family. It depends on Mn(2+) as a cofactor.

It catalyses the reaction N-formimidoyl-L-glutamate + H2O = formamide + L-glutamate. The protein operates within amino-acid degradation; L-histidine degradation into L-glutamate; L-glutamate from N-formimidoyl-L-glutamate (hydrolase route): step 1/1. Functionally, catalyzes the conversion of N-formimidoyl-L-glutamate to L-glutamate and formamide. The chain is Formimidoylglutamase from Corynebacterium efficiens (strain DSM 44549 / YS-314 / AJ 12310 / JCM 11189 / NBRC 100395).